Here is a 118-residue protein sequence, read N- to C-terminus: Large ribosomal subunit protein bL20 (118 aa).

Belongs to the bacterial ribosomal protein bL20 family.

Functionally, binds directly to 23S ribosomal RNA and is necessary for the in vitro assembly process of the 50S ribosomal subunit. It is not involved in the protein synthesizing functions of that subunit. This is Large ribosomal subunit protein bL20 (rplT) from Buchnera aphidicola subsp. Acyrthosiphon pisum (strain APS) (Acyrthosiphon pisum symbiotic bacterium).